The chain runs to 115 residues: Large ribosomal subunit protein bL19 (115 aa).

Belongs to the bacterial ribosomal protein bL19 family.

In terms of biological role, this protein is located at the 30S-50S ribosomal subunit interface and may play a role in the structure and function of the aminoacyl-tRNA binding site. The polypeptide is Large ribosomal subunit protein bL19 (Bacillus pumilus (strain SAFR-032)).